The chain runs to 393 residues: Meiotic driver wtf19 (393 aa).

Residues 1–98 form a disordered region; the sequence is MKNKYYPLRS…SSGTADNSST (98 aa). Basic and acidic residues predominate over residues 11 to 29; it reads SMDELSAKNDNEIDLEKGP. Composition is skewed to polar residues over residues 57-72 and 89-98; these read GANN…STTP and SSGTADNSST. A run of 8 helical transmembrane segments spans residues 104 to 124, 137 to 157, 167 to 187, 208 to 228, 233 to 253, 269 to 289, 296 to 316, and 332 to 352; these read AFLS…YLTY, WVYF…LWYF, VTVI…AQCV, CVKV…IGLF, EMMI…FGCV, CTIS…FWTF, LAKV…TMFL, and VLFI…GALI.

This sequence belongs to the WTF family. Homomer. Forms protein aggregates. The two isoforms can interact with each other and with themselves. High sequence similarity is required for their interaction.

The protein resides in the spore membrane. It localises to the vacuole membrane. Its subcellular location is the ascus epiplasm. It is found in the cytoplasm. The protein localises to the endoplasmic reticulum membrane. In terms of biological role, promotes unequal transmission of alleles from the parental zygote to progeny spores by acting as poison/antidote system where the poison and antidote proteins are produced from the same locus; the poison component is trans-acting and targets all spores within an ascus whereas the antidote component is spore-specific, leading to poisoning of all progeny that do not inherit the allele. Functionally, localizes isoform 2 to the vacuole thereby facilitating its degradation. Forms toxic aggregates that disrupt spore maturation. This is Meiotic driver wtf19 from Schizosaccharomyces pombe (strain 972 / ATCC 24843) (Fission yeast).